Consider the following 354-residue polypeptide: MSGKPKRLMVMAGGTGGHVFPGLAVAHHLMAQGWQVRWLGTADRMEADLVPKHGIEIDFIRISGLRGKGLKAQLSAPLRIWHAVRQAKAIMRNYQPDVVLGMGGYVSGPGGLAAWLCGIPVVLHEQNGIAGLTNRWLARIAKTVLQAFPGAFPNAEVVGNPVRTDVLALPLPAERLIGREGPIRVLVIGGSQGARVLNQTVPEVAARLGDKITLWHQVGKGALENVLRDYERVGQTQHKVAEFIDDMAAAYAWADVVVCRSGALTVSEIAAAGLPAIFVPFQHKDRQQYWNARPLEEAGAAKIIEQPQFNADVVAELLAGWDRPTLLAMAEKARAVAIPDATERVAAELVRVAK.

Residues 15–17 (TGG), N127, R163, S191, I244, 263–268 (ALTVSE), and Q288 contribute to the UDP-N-acetyl-alpha-D-glucosamine site.

This sequence belongs to the glycosyltransferase 28 family. MurG subfamily.

The protein localises to the cell inner membrane. It catalyses the reaction di-trans,octa-cis-undecaprenyl diphospho-N-acetyl-alpha-D-muramoyl-L-alanyl-D-glutamyl-meso-2,6-diaminopimeloyl-D-alanyl-D-alanine + UDP-N-acetyl-alpha-D-glucosamine = di-trans,octa-cis-undecaprenyl diphospho-[N-acetyl-alpha-D-glucosaminyl-(1-&gt;4)]-N-acetyl-alpha-D-muramoyl-L-alanyl-D-glutamyl-meso-2,6-diaminopimeloyl-D-alanyl-D-alanine + UDP + H(+). It functions in the pathway cell wall biogenesis; peptidoglycan biosynthesis. Functionally, cell wall formation. Catalyzes the transfer of a GlcNAc subunit on undecaprenyl-pyrophosphoryl-MurNAc-pentapeptide (lipid intermediate I) to form undecaprenyl-pyrophosphoryl-MurNAc-(pentapeptide)GlcNAc (lipid intermediate II). This chain is UDP-N-acetylglucosamine--N-acetylmuramyl-(pentapeptide) pyrophosphoryl-undecaprenol N-acetylglucosamine transferase, found in Serratia proteamaculans (strain 568).